We begin with the raw amino-acid sequence, 596 residues long: Phosphomethylpyrimidine synthase 1 (596 aa).

Substrate contacts are provided by residues Asn-228, Met-257, Tyr-286, His-322, 342-344 (SRG), 383-386 (DGLR), and Glu-422. His-426 is a binding site for Zn(2+). Tyr-449 contributes to the substrate binding site. Residue His-490 participates in Zn(2+) binding. Residues Cys-570, Cys-573, and Cys-578 each coordinate [4Fe-4S] cluster.

This sequence belongs to the ThiC family. In terms of assembly, homodimer. [4Fe-4S] cluster serves as cofactor.

The catalysed reaction is 5-amino-1-(5-phospho-beta-D-ribosyl)imidazole + S-adenosyl-L-methionine = 4-amino-2-methyl-5-(phosphooxymethyl)pyrimidine + CO + 5'-deoxyadenosine + formate + L-methionine + 3 H(+). It participates in cofactor biosynthesis; thiamine diphosphate biosynthesis. In terms of biological role, catalyzes the synthesis of the hydroxymethylpyrimidine phosphate (HMP-P) moiety of thiamine from aminoimidazole ribotide (AIR) in a radical S-adenosyl-L-methionine (SAM)-dependent reaction. The polypeptide is Phosphomethylpyrimidine synthase 1 (Syntrophotalea carbinolica (strain DSM 2380 / NBRC 103641 / GraBd1) (Pelobacter carbinolicus)).